The chain runs to 1018 residues: Cytadherence high molecular weight protein 1 (1018 aa).

Coiled-coil stretches lie at residues Asn782–Leu815 and Glu849–Lys880.

Post-translationally, phosphorylated mainly on serine residues.

It localises to the cell projection. It is found in the attachment organelle membrane. Component of the cytoskeleton-like structure which stabilizes the shape of the wall-less Mycoplasma. This cytoskeleton-like network of accessory proteins containing HMW proteins 1 to 5 allows the proper anchoring of cytadhesin proteins in the mycoplasmal membrane at the attachment organelle. The polypeptide is Cytadherence high molecular weight protein 1 (hmw1) (Mycoplasma pneumoniae (strain ATCC 29342 / M129 / Subtype 1) (Mycoplasmoides pneumoniae)).